The primary structure comprises 217 residues: Uridylate kinase (217 aa).

6–10 (KLSGR) is an ATP binding site. Glycine 38 is a binding site for UMP. ATP is bound by residues glycine 39 and arginine 43. Residues aspartate 60 and 107-113 (FQPGQST) contribute to the UMP site. Asparagine 134, tyrosine 139, and aspartate 142 together coordinate ATP.

Belongs to the UMP kinase family. Homohexamer.

It is found in the cytoplasm. It catalyses the reaction UMP + ATP = UDP + ADP. Its pathway is pyrimidine metabolism; CTP biosynthesis via de novo pathway; UDP from UMP (UMPK route): step 1/1. Its activity is regulated as follows. Inhibited by UTP. Catalyzes the reversible phosphorylation of UMP to UDP. This Pyrobaculum islandicum (strain DSM 4184 / JCM 9189 / GEO3) protein is Uridylate kinase.